A 190-amino-acid chain; its full sequence is Class III hydrophobin F (190 aa).

The first 18 residues, 1–18 (MRPITILCTLATLSTTLA), serve as a signal peptide directing secretion. Disulfide bonds link Cys-54–Cys-115, Cys-62–Cys-109, Cys-63–Cys-97, and Cys-116–Cys-131.

Belongs to the fungal hydrophobin family. In terms of assembly, self-assembles to form functional amyloid fibrils called rodlets. Self-assembly into fibrillar rodlets occurs spontaneously at hydrophobic:hydrophilic interfaces and the rodlets further associate laterally to form amphipathic monolayers.

It localises to the secreted. It is found in the cell wall. Functionally, aerial growth, conidiation, and dispersal of filamentous fungi in the environment rely upon a capability of their secreting small amphipathic proteins called hydrophobins (HPBs) with low sequence identity. Class I can self-assemble into an outermost layer of rodlet bundles on aerial cell surfaces, conferring cellular hydrophobicity that supports fungal growth, development and dispersal; whereas Class II form highly ordered films at water-air interfaces through intermolecular interactions but contribute nothing to the rodlet structure. RodF and rodG belong to Class III, which contains hydrophobins with intermediate (between classes I and II) or atypical characteristics. RodF, unlike rodA, is not required for rodlet formation. This chain is Class III hydrophobin F, found in Aspergillus fumigatus (strain ATCC MYA-4609 / CBS 101355 / FGSC A1100 / Af293) (Neosartorya fumigata).